We begin with the raw amino-acid sequence, 400 residues long: Elongation factor Tu (400 aa).

Positions Lys-10 to Val-208 constitute a tr-type G domain. The interval Gly-19–Thr-26 is G1. Gly-19–Thr-26 contacts GTP. Thr-26 contacts Mg(2+). The tract at residues Gly-60 to Asn-64 is G2. Positions Asp-81–Gly-84 are G3. Residues Asp-81–His-85 and Asn-136–Asp-139 contribute to the GTP site. The segment at Asn-136 to Asp-139 is G4. The G5 stretch occupies residues Ser-174 to Leu-176.

The protein belongs to the TRAFAC class translation factor GTPase superfamily. Classic translation factor GTPase family. EF-Tu/EF-1A subfamily. As to quaternary structure, monomer.

The protein resides in the cytoplasm. It catalyses the reaction GTP + H2O = GDP + phosphate + H(+). GTP hydrolase that promotes the GTP-dependent binding of aminoacyl-tRNA to the A-site of ribosomes during protein biosynthesis. The protein is Elongation factor Tu of Fervidobacterium nodosum (strain ATCC 35602 / DSM 5306 / Rt17-B1).